The following is a 129-amino-acid chain: Putative zinc finger protein 702 (129 aa).

3 C2H2-type zinc fingers span residues 34 to 56 (YKCDICGKVFNQKRYLAYHHRCH), 62 to 84 (YKCNQCGKTFSYKSSLVIHKAIH), and 90 to 112 (HKCNECGKVFNQKAYLASHHRLH).

This sequence belongs to the krueppel C2H2-type zinc-finger protein family.

The protein localises to the nucleus. May be involved in transcriptional regulation. The protein is Putative zinc finger protein 702 (ZNF702P) of Homo sapiens (Human).